Consider the following 572-residue polypeptide: Pentatricopeptide repeat-containing protein At5g15010, mitochondrial (572 aa).

The transit peptide at 1–57 (MRGIFLIRSRLSIFRAPAVKCLRFSNVLPSLSNNCIVRLYMEPPVACVLPLGLCSMF) directs the protein to the mitochondrion. 10 PPR repeats span residues 160 to 194 (SVREYHSMISILGKMRKFDTAWTLIDEMRKFSPSL), 196 to 230 (NSQTLLIMIRKYCAVHDVGKAINTFHAYKRFKLEM), 231 to 261 (GIDDFQSLLSALCRYKNVSDAGHLIFCNKDK), 265 to 300 (DAKSFNIVLNGWCNVIGSPREAERVWMEMGNVGVKH), 301 to 335 (DVVSYSSMISCYSKGGSLNKVLKLFDRMKKECIEP), 336 to 371 (DRKVYNAVVHALAKASFVSEARNLMKTMEEEKGIEP), 372 to 406 (NVVTYNSLIKPLCKARKTEEAKQVFDEMLEKGLFP), 412 to 438 (HAFMRILRTGEEVFELLAKMRKMGCEP), 439 to 473 (TVETYIMLIRKLCRWRDFDNVLLLWDEMKEKTVGP), and 474 to 508 (DLSSYIVMIHGLFLNGKIEEAYGYYKEMKDKGMRP).

It belongs to the PPR family. P subfamily.

The protein resides in the mitochondrion. This chain is Pentatricopeptide repeat-containing protein At5g15010, mitochondrial, found in Arabidopsis thaliana (Mouse-ear cress).